Consider the following 327-residue polypeptide: rRNA 2'-O-methyltransferase fibrillarin (327 aa).

The segment at 1–96 (MGTDYRNSGR…GFKGGAKTMV (96 aa)) is disordered. Residues R10, R19, R44, R49, R55, R65, R69, and R78 each carry the asymmetric dimethylarginine modification. Over residues 22–56 (GNDRRDSGRSFGDRRPERPDFKRGDGGRGFGDRRG) the composition is skewed to basic and acidic residues. Gly residues predominate over residues 73-90 (DGPGGRGGPGGPGGGFKG). Residues 181–182 (TT), 200–201 (EF), 225–226 (DA), and 245–248 (DVAQ) each bind S-adenosyl-L-methionine.

This sequence belongs to the methyltransferase superfamily. Fibrillarin family. As to quaternary structure, component of box C/D small nucleolar ribonucleoprotein (snoRNP) particles. It is associated with the U3, U8 and U13 small nuclear RNAs. By homology to other fibrillarins, some or all of the N-terminal domain arginines are modified to asymmetric dimethylarginine (DMA).

It is found in the nucleus. The protein localises to the nucleolus. The enzyme catalyses L-glutaminyl-[histone H2A] + S-adenosyl-L-methionine = N(5)-methyl-L-glutaminyl-[histone H2A] + S-adenosyl-L-homocysteine + H(+). S-adenosyl-L-methionine-dependent methyltransferase that has the ability to methylate both RNAs and proteins. Involved in pre-rRNA processing. Utilizes the methyl donor S-adenosyl-L-methionine to catalyze the site-specific 2'-hydroxyl methylation of ribose moieties in pre-ribosomal RNA. Site specificity is provided by a guide RNA that base pairs with the substrate. Methylation occurs at a characteristic distance from the sequence involved in base pairing with the guide RNA. Also acts as a protein methyltransferase by mediating methylation of 'Gln-105' of histone H2A (H2AQ105me), a modification that impairs binding of the FACT complex and is specifically present at 35S ribosomal DNA locus. This Giardia intestinalis (Giardia lamblia) protein is rRNA 2'-O-methyltransferase fibrillarin.